The chain runs to 288 residues: Alpha/beta hydrolase domain-containing protein 17B (288 aa).

Residues Ser170, Asp235, and His264 each act as charge relay system in the active site.

The protein belongs to the AB hydrolase superfamily. ABHD17 family. Post-translationally, palmitoylated on cysteine residues located in a cysteine cluster at the N-terminus which promotes membrane localization.

The protein localises to the cell membrane. It is found in the recycling endosome membrane. Its subcellular location is the cell projection. The protein resides in the dendritic spine. It localises to the postsynaptic density membrane. It carries out the reaction S-hexadecanoyl-L-cysteinyl-[protein] + H2O = L-cysteinyl-[protein] + hexadecanoate + H(+). Its function is as follows. Hydrolyzes fatty acids from S-acylated cysteine residues in proteins. The chain is Alpha/beta hydrolase domain-containing protein 17B from Xenopus tropicalis (Western clawed frog).